Here is a 417-residue protein sequence, read N- to C-terminus: Dibenzothiophene monooxygenase (417 aa).

Positions 18 to 124 are helical N-terminus; sequence NDPVAVARGL…HLYTQIAQNN (107 aa). Residues tyrosine 96, 129–134, 159–163, arginine 282, 369–370, and histidine 391 contribute to the FMN site; these read NASSEN, KHFCS, and AR. Positions 125–233 are central beta-barrel N-terminus; sequence WWTGNASSEN…KVEPDEVLGA (109 aa). Residues 131 to 142 form a lid loop region; sequence SSENNSHVLDWK. The interval 234-417 is helical C-terminus; it reads PNAFVLAFIQ…GQYPIPGFTS (184 aa).

Belongs to the DszC flavin monooxygenase family. Homotetramer formed by a dimer of dimers; FMN binds between monomers of the homodimer.

The protein localises to the cytoplasm. It catalyses the reaction dibenzothiophene + 2 FMNH2 + 2 O2 = dibenzothiophene 5,5-dioxide + 2 FMN + 2 H2O + 2 H(+). The catalysed reaction is dibenzothiophene + FMNH2 + O2 = dibenzothiophene 5-oxide + FMN + H2O + H(+). It carries out the reaction dibenzothiophene 5-oxide + FMNH2 + O2 = dibenzothiophene 5,5-dioxide + FMN + H2O + H(+). Its pathway is sulfur metabolism; dibenzothiophene degradation. With respect to regulation, DBT degradation completely inhibited by Cu(2+), Mn(2+), p-chloromercuribenzoic acid, 2,2-bipyridyl, 1,10-phenanthroline, and strongly inhibited by Zn(2+), 5,5'- Dithiobis(2-nitrobenzoic acid) and 8-quinolinol. Its function is as follows. Catalyzes the first step of the '4S' desulfurization pathway that removes covalently bound sulfur from dibenzothiophene (DBT) without breaking carbon-carbon bonds. Sulfur dioxygenase which converts DBT to DBT-sulfone (DBTO2 or DBT 5,5-dioxide) in a stepwise manner. Also acts on thioxanthen-9-one and 4,6-dimethyl DBT and 2,8-dimethyl DBT. In Rhodococcus erythropolis (Arthrobacter picolinophilus), this protein is Dibenzothiophene monooxygenase.